The following is a 292-amino-acid chain: Putative peptidyl-prolyl cis-trans isomerase NifM (292 aa).

The PpiC domain occupies 148-243 (HILVTINEDF…IGFHVLYCES (96 aa)).

This sequence belongs to the PpiC/parvulin rotamase family.

It catalyses the reaction [protein]-peptidylproline (omega=180) = [protein]-peptidylproline (omega=0). Required for the activation and stabilization of the iron-component (NifH) of nitrogenase. Probable PPIase. The chain is Putative peptidyl-prolyl cis-trans isomerase NifM (nifM) from Azotobacter vinelandii.